The chain runs to 449 residues: Glutamyl-tRNA reductase (449 aa).

Residues 49 to 52 (TCNR), Ser-109, 114 to 116 (ETQ), and Gln-120 each bind substrate. Catalysis depends on Cys-50, which acts as the Nucleophile. Residue 189-194 (GAGKMS) coordinates NADP(+). A disordered region spans residues 427-449 (NFTHPREEMEESDEKRSYCGESR).

Belongs to the glutamyl-tRNA reductase family. As to quaternary structure, homodimer.

The enzyme catalyses (S)-4-amino-5-oxopentanoate + tRNA(Glu) + NADP(+) = L-glutamyl-tRNA(Glu) + NADPH + H(+). The protein operates within porphyrin-containing compound metabolism; protoporphyrin-IX biosynthesis; 5-aminolevulinate from L-glutamyl-tRNA(Glu): step 1/2. Functionally, catalyzes the NADPH-dependent reduction of glutamyl-tRNA(Glu) to glutamate 1-semialdehyde (GSA). The chain is Glutamyl-tRNA reductase from Carboxydothermus hydrogenoformans (strain ATCC BAA-161 / DSM 6008 / Z-2901).